We begin with the raw amino-acid sequence, 354 residues long: Guanine nucleotide-binding protein G(i) subunit alpha-3 (354 aa).

The N-myristoyl glycine moiety is linked to residue glycine 2. A lipid anchor (S-palmitoyl cysteine) is attached at cysteine 3. One can recognise a G-alpha domain in the interval 32–354 (KEVKLLLLGA…KNNLKECGLY (323 aa)). Positions 35 to 48 (KLLLLGAGESGKST) are G1 motif. Positions 42, 43, 44, 45, 46, 47, 48, 150, 151, 175, 176, 177, 178, 179, 180, 181, 201, 203, 269, 270, 272, 273, 325, 326, and 327 each coordinate GTP. Residue serine 47 participates in Mg(2+) binding. The interval 173–181 (DVLRTRVKT) is G2 motif. Mg(2+) is bound at residue threonine 181. The segment at 196–205 (FKMFDVGGQR) is G3 motif. The interval 265–272 (ILFLNKKD) is G4 motif. The segment at 324–329 (TCATDT) is G5 motif.

The protein belongs to the G-alpha family. G(i/o/t/z) subfamily. As to quaternary structure, heterotrimeric G proteins are composed of 3 units; alpha, beta and gamma. The alpha subunit contains the guanine nucleotide binding site. GTP binding causes dissociation of the heterotrimer, liberating the individual subunits so that they can interact with downstream effector proteins. Forms a complex with CCDC88A/GIV and EGFR which leads to enhanced EGFR signaling and triggering of cell migration; ligand stimulation is required for recruitment of GNAI3 to the complex. Interacts (inactive GDP-bound form) with CCDC88A/GIV (via GBA motif); the interaction leads to activation of GNAI3. Interacts (inactive GDP-bound form) with CCDC88C/DAPLE (via GBA motif); the interaction leads to activation of GNAI3. Interacts (inactive GDP-bound form) with NUCB1 (via GBA motif) and NUCB2 (via GBA motif); the interaction leads to activation of GNAI3. Interacts (inactive GDP-bound form) with PLCD4 (via GBA motif); the interaction leads to activation of GNAI3. Interacts with INSR; the interaction is probably mediated by CCDC88A/GIV. Interacts with GPSM1. Interacts (GDP-bound form) with GPSM2 (via GoLoco domains). Does not interact with RGS2. Interacts with RGS8 and RGS10; this strongly enhances the intrinsic GTPase activity. Interacts with RGS16; this strongly enhances the intrinsic GTPase activity. Interacts with RGS12. Interacts (via active GTP- or inactive GDP-bound form) with RGS14. Interacts (via active GTP-bound form) with TRPC5 (via ANK repeats) in a homotetrameric ion channel; the interaction is direct and activates the channel activity.

The protein localises to the cytoplasm. It is found in the cell membrane. Its subcellular location is the cytoskeleton. It localises to the microtubule organizing center. The protein resides in the centrosome. Heterotrimeric guanine nucleotide-binding proteins (G proteins) function as transducers downstream of G protein-coupled receptors (GPCRs) in numerous signaling cascades. The alpha chain contains the guanine nucleotide binding site and alternates between an active, GTP-bound state and an inactive, GDP-bound state. Signaling by an activated GPCR promotes GDP release and GTP binding. The alpha subunit has a low GTPase activity that converts bound GTP to GDP, thereby terminating the signal. Both GDP release and GTP hydrolysis are modulated by numerous regulatory proteins. Signaling is mediated via effector proteins, such as adenylate cyclase. Inhibits adenylate cyclase activity, leading to decreased intracellular cAMP levels. Stimulates the activity of receptor-regulated K(+) channels. The active GTP-bound form prevents the association of RGS14 with centrosomes and is required for the translocation of RGS14 from the cytoplasm to the plasma membrane. May play a role in cell division. The active GTP-bound form activates the calcium permeant TRPC5 ion channels. This Mus musculus (Mouse) protein is Guanine nucleotide-binding protein G(i) subunit alpha-3 (Gnai3).